We begin with the raw amino-acid sequence, 95 residues long: MSESNVTEETKAARGFRKTRQGLVVSDKMDKTVVVAVEDRVTHALYGKVIRRTEKLKAHDEQNAAGVGDRVLLMETRPLSATKRWRVVEVLEKAK.

It belongs to the universal ribosomal protein uS17 family. In terms of assembly, part of the 30S ribosomal subunit.

Functionally, one of the primary rRNA binding proteins, it binds specifically to the 5'-end of 16S ribosomal RNA. The protein is Small ribosomal subunit protein uS17 of Streptomyces coelicolor (strain ATCC BAA-471 / A3(2) / M145).